The chain runs to 204 residues: MAEDSDMRNELADMQQRADQLADESLESTRRMLQLVEESKDAGIRTLVMLDEQGEQLERIEEGMDQINKDMKDAEKNLNDLGKFCGLCSCPCNKMKSGASKAWGNNQDGVVASQPARVVDEREQMAISGGFIRRVTDDARENEMDENLEQVGGIIGNLRHMALDMGNEIDTQNRQIDRIMEKADSNKTRIDEANQRATKMLGSG.

Over residues 1-11 the composition is skewed to basic and acidic residues; sequence MAEDSDMRNEL. Positions 1–25 are disordered; the sequence is MAEDSDMRNELADMQQRADQLADES. T-SNARE coiled-coil homology domains follow at residues 19–81 and 138–200; these read DQLA…LNDL and DARE…ATKM.

It belongs to the SNAP-25 family. Expressed in several regions throughout the adult brain, including the mesencephalon.

The protein localises to the synapse. It is found in the synaptosome. Its subcellular location is the cell membrane. Functionally, may play an important role in the synaptic function of specific neuronal systems. Associates with proteins involved in vesicle docking and membrane fusion. The protein is Synaptosomal-associated protein 25-A of Danio rerio (Zebrafish).